The following is an 815-amino-acid chain: Lon protease 1 (815 aa).

The 194-residue stretch at 12–205 (VFVLALRDVV…HILKTIETEI (194 aa)) folds into the Lon N-terminal domain. 358 to 365 (GPPGVGKT) serves as a coordination point for ATP. A Lon proteolytic domain is found at 594 to 775 (TNQIGQVAGL…DEVFKIALES (182 aa)). Active-site residues include Ser-681 and Lys-724.

The protein belongs to the peptidase S16 family. Homohexamer. Organized in a ring with a central cavity.

The protein localises to the cytoplasm. The catalysed reaction is Hydrolysis of proteins in presence of ATP.. Functionally, ATP-dependent serine protease that mediates the selective degradation of mutant and abnormal proteins as well as certain short-lived regulatory proteins. Required for cellular homeostasis and for survival from DNA damage and developmental changes induced by stress. Degrades polypeptides processively to yield small peptide fragments that are 5 to 10 amino acids long. Binds to DNA in a double-stranded, site-specific manner. The protein is Lon protease 1 of Hydrogenovibrio crunogenus (strain DSM 25203 / XCL-2) (Thiomicrospira crunogena).